Here is a 654-residue protein sequence, read N- to C-terminus: Pentatricopeptide repeat-containing protein At3g16610 (654 aa).

PPR repeat units follow at residues 1–32 (MFLS…SLTL), 34–64 (SSTV…IPHP), 67–101 (NPIA…GVRP), 102–136 (TKYT…DFAT), 137–171 (DMYV…DMVA), 172–203 (WNAM…GLSP), 204–238 (NLST…GFSN), 239–269 (DLVV…DFKK), 270–304 (NEVT…DNVA), 307–341 (TPVA…GFIL), 342–372 (DLTV…IGLK), 373–407 (DVIS…GIRP), 408–442 (DITT…GYAV), 443–473 (NTSI…MHKR), 474–508 (DIVS…GVNP), 509–543 (DEVT…DFNV), and 546–576 (RIDH…MPFE). The type E motif; degenerate stretch occupies residues 581 to 654 (VLGTLLSACW…KTPGYSWVDV (74 aa)).

This sequence belongs to the PPR family. PCMP-E subfamily.

This is Pentatricopeptide repeat-containing protein At3g16610 (PCMP-E91) from Arabidopsis thaliana (Mouse-ear cress).